The chain runs to 313 residues: tRNA dimethylallyltransferase (313 aa).

10 to 17 (GPTAVGKS) lines the ATP pocket. 12–17 (TAVGKS) lines the substrate pocket. The interaction with substrate tRNA stretch occupies residues 35–38 (DSTQ).

Belongs to the IPP transferase family. In terms of assembly, monomer. Requires Mg(2+) as cofactor.

The catalysed reaction is adenosine(37) in tRNA + dimethylallyl diphosphate = N(6)-dimethylallyladenosine(37) in tRNA + diphosphate. In terms of biological role, catalyzes the transfer of a dimethylallyl group onto the adenine at position 37 in tRNAs that read codons beginning with uridine, leading to the formation of N6-(dimethylallyl)adenosine (i(6)A). The sequence is that of tRNA dimethylallyltransferase from Oceanobacillus iheyensis (strain DSM 14371 / CIP 107618 / JCM 11309 / KCTC 3954 / HTE831).